Here is a 343-residue protein sequence, read N- to C-terminus: Transmembrane protein 120A (343 aa).

The Cytoplasmic portion of the chain corresponds to 1–135 (MQSPPPDPLG…KFAYKDEYEK (135 aa)). K130 contributes to the CoA binding site. Residues 136–156 (FKLYLTIILIVISFTCRFLLN) form a helical membrane-spanning segment. Residues 157-162 (SRVTDA) are Extracellular-facing. A helical membrane pass occupies residues 163 to 183 (AFNFLLVWYYCTLTIRESILI). Topologically, residues 184-190 (NNGSRIK) are cytoplasmic. Residues S187 and R188 each contribute to the CoA site. Residues 191 to 211 (GWWVFHHYVSTFLSGVMLTWP) traverse the membrane as a helical segment. Topologically, residues 212-222 (DGLMYQKFRNQ) are extracellular. Residues 223 to 240 (FLSFSMYQSFVQFLQYYY) form a helical membrane-spanning segment. Positions 237, 240, 241, and 283 each coordinate CoA. The Cytoplasmic segment spans residues 241–273 (QSGCLYRLRALGERHTMDLTVEGFQSWMWRGLT). Residues 274-294 (FLLPFLFFGHFWQLFNALTLF) form a helical membrane-spanning segment. The Extracellular portion of the chain corresponds to 295–305 (NLARDPECKEW). A helical transmembrane segment spans residues 306-326 (QVLMCGFPFLLLFLGNFFTTL). The Cytoplasmic segment spans residues 327–343 (RVVHQKFHSQQHGNKKD). K332 serves as a coordination point for CoA.

This sequence belongs to the TMEM120 family. In terms of assembly, homodimer. Forms heterooligomer with TMEM120B. Interacts with PKD2; TMEM120A inhibits PKD2 channel activity through the physical association of PKD2 with TMEM120A. As to expression, widely expressed, with higher expression in the heart, kidneys, colon and sensory neurons of the dorsal root ganglia. Expressed in nociceptors. Highly expressed in white adipose tissue (at protein level). Highly expressed in brown adipose tissue and expressed at low levels in liver.

It localises to the cell membrane. Its subcellular location is the nucleus envelope. The protein resides in the nucleus inner membrane. The protein localises to the endoplasmic reticulum. In terms of biological role, multifunctional protein involved in mechanosensation, and plays an essential role in lipid metabolism and adipocyte differentiation. May function as a potential ion channel involved in sensing mechanical stimuli. Mediates the mechanosensitivity of the PKD2-TMEM120A channel complex through direct physical interaction. TMEM120A seems to affect mechanosensation by inhibiting PIEZO2 channels, possibly by altering cellular lipid content. TMEM120A is structurally similar to a lipid-modifying enzyme, ELOVL7, and contains a bound coenzyme A molecule, which suggests it might function as an enzyme in lipid metabolism. The sequence is that of Transmembrane protein 120A from Mus musculus (Mouse).